The following is a 69-amino-acid chain: U-scoloptoxin(21)-Sm2a (69 aa).

The N-terminal stretch at 1 to 21 is a signal peptide; the sequence is MFFLGFIIVCASEEQSDNRLP. The interval 46 to 69 is disordered; sequence ANDPNGPGRRRRSPIVREEILRHP. Residues 60–69 are compositionally biased toward basic and acidic residues; it reads IVREEILRHP.

It belongs to the scoloptoxin-21 family. In terms of tissue distribution, expressed by the venom gland.

It localises to the secreted. This chain is U-scoloptoxin(21)-Sm2a, found in Scolopendra morsitans (Tanzanian blue ringleg centipede).